Reading from the N-terminus, the 295-residue chain is Zygote arrest protein 1.S (295 aa).

Disordered stretches follow at residues 80 to 115 (SVQC…TKTV) and 144 to 186 (EKGE…APAQ). Over residues 144–176 (EKGEAVRSEGSEGGRQEGKQGDGEIKEQMKMDK) the composition is skewed to basic and acidic residues. The 3CxxC-type zinc finger occupies 197 to 280 (KYGYYHCKDC…RQDLCGRCKG (84 aa)).

This sequence belongs to the ZAR1 family. As to expression, ovary. Also expressed in lung and muscle.

It localises to the cytoplasm. Its subcellular location is the cytoplasmic ribonucleoprotein granule. In terms of biological role, mRNA-binding protein required for maternal mRNA storage, translation and degradation during oocyte maturation. Probably promotes formation of some phase-separated membraneless compartment that stores maternal mRNAs in oocytes: acts by undergoing liquid-liquid phase separation upon binding to maternal mRNAs. Binds to the 3'-UTR of maternal mRNAs in immature oocytes, inhibiting their translation. The polypeptide is Zygote arrest protein 1.S (zar1.S) (Xenopus laevis (African clawed frog)).